The sequence spans 119 residues: Hydrogenase maturation factor HypA (119 aa).

H2 contributes to the Ni(2+) binding site. Residues C73, C76, C89, and C92 each contribute to the Zn(2+) site.

Belongs to the HypA/HybF family.

Involved in the maturation of [NiFe] hydrogenases. Required for nickel insertion into the metal center of the hydrogenase. The sequence is that of Hydrogenase maturation factor HypA from Dehalococcoides mccartyi (strain CBDB1).